A 420-amino-acid polypeptide reads, in one-letter code: MAFCGPRTAARLSHSTRALHYTHRSFASPRTLNEVVIASAARTPIGSFQGTLSSLPATKLGSIAIKAAVERAGIPADEVKEVYMGNVLQAGQGQAPSRQATLGAGLAISTPTTTINKVCASGMKSVMLAAQSLMCGHQQVMVAGGMESMSNVPYCMSRGATPYGGVKLEDIIVKDGLTDVYNKFHMGNCAENTAKKLSISREEQDGFAITSYTRSKAAWDSGLIANEIAPVTIAQKGKPDIIVQEDEEYKRVDFSKFPKLKTVFQKDNGTVTAANSSTLNDGAAALVLMTAEAANRLNVTPLARIVAFADAAVDPIDFPIAPAYAIPKLLSEAGLKKEDIAMWEINEAFSVVVLANIKMLDIDPARVNVNGGAVSLGHPIGMSGARIVGHMAHALRKGQFGIAGICNGGGGASAVLIEKL.

The N-terminal 33 residues, 1–33 (MAFCGPRTAARLSHSTRALHYTHRSFASPRTLN), are a transit peptide targeting the mitochondrion. Cys-119 functions as the Acyl-thioester intermediate in the catalytic mechanism. CoA-binding positions include Tyr-212, 251 to 253 (RVD), and Lys-256. Tyr-212 is a K(+) binding site. K(+)-binding residues include Ala-273 and Ala-274. Ser-277 contributes to the CoA binding site. Val-374 provides a ligand contact to K(+). Cys-406 serves as the catalytic Proton donor/acceptor.

The protein belongs to the thiolase-like superfamily. Thiolase family. As to quaternary structure, homotetramer.

The protein resides in the mitochondrion. It catalyses the reaction 2 acetyl-CoA = acetoacetyl-CoA + CoA. It carries out the reaction propanoyl-CoA + acetyl-CoA = 2-methyl-3-oxobutanoyl-CoA + CoA. Its pathway is lipid metabolism; fatty acid beta-oxidation. Functionally, this is one of the enzymes that catalyzes the last step of the mitochondrial beta-oxidation pathway, an aerobic process breaking down fatty acids into acetyl-CoA. Using free coenzyme A/CoA, catalyzes the thiolytic cleavage of medium- to long-chain 3-oxoacyl-CoAs into acetyl-CoA and a fatty acyl-CoA shortened by two carbon atoms. The activity of the enzyme is reversible and it can also catalyze the condensation of two acetyl-CoA molecules into acetoacetyl-CoA. Thereby, it plays a major role in ketone body metabolism. The polypeptide is Acetyl-CoA acetyltransferase B, mitochondrial (acat1-b) (Xenopus laevis (African clawed frog)).